The primary structure comprises 474 residues: UDP glycosyltransferase 9 (474 aa).

UDP-alpha-D-glucose-binding positions include serine 296, 349-350, 367-375, and 389-392; these read WC, HCGWNSTLE, and WADQ.

This sequence belongs to the UDP-glycosyltransferase family.

The protein is UDP glycosyltransferase 9 of Catharanthus roseus (Madagascar periwinkle).